A 396-amino-acid polypeptide reads, in one-letter code: Maltose/maltodextrin-binding periplasmic protein (396 aa).

A signal peptide spans 1–26 (MKIKTGVGILALSALTTMMISAPALA).

This sequence belongs to the bacterial solute-binding protein 1 family. As to quaternary structure, the complex is composed of two ATP-binding proteins (MalK), two transmembrane proteins (MalG and MalF) and a solute-binding protein (MalE).

The protein localises to the periplasm. Its function is as follows. Part of the ABC transporter complex MalEFGK involved in maltose/maltodextrin import. Binds maltose and higher maltodextrins. This chain is Maltose/maltodextrin-binding periplasmic protein (malE), found in Salmonella typhimurium (strain LT2 / SGSC1412 / ATCC 700720).